A 239-amino-acid polypeptide reads, in one-letter code: Phosducin-like protein 3 (239 aa).

A disordered region spans residues 16–37; that stretch reads KKGILPPKETPVEEEEDEQLHL. The Phosducin domain occupies 28 to 201; sequence EEEEDEQLHL…LEWRLSESGA (174 aa). Ser41 is modified (phosphoserine). Positions 89–239 are thioredoxin fold; sequence FGELKEISGQ…RDGEEDSDED (151 aa). Residues 217-227 are compositionally biased toward polar residues; the sequence is QLMTSIRCSAN. The disordered stretch occupies residues 217-239; sequence QLMTSIRCSANTHRDGEEDSDED.

It belongs to the phosducin family. As to quaternary structure, interacts (via thioredoxin fold region) with kdr/vegfr2 (via juxtamembrane domain). Expressed in endothelial cells.

The protein resides in the cytoplasm. It is found in the perinuclear region. Its subcellular location is the endoplasmic reticulum. In terms of biological role, acts as a chaperone for the angiogenic VEGF receptor KDR/VEGFR2, increasing its abundance by inhibiting its ubiquitination and degradation. Inhibits the folding activity of the chaperonin-containing T-complex (CCT) which leads to inhibition of cytoskeletal actin folding. Acts as a chaperone during heat shock alongside HSP90 and HSP40/70 chaperone complexes. Modulates the activation of caspases during apoptosis. This Danio rerio (Zebrafish) protein is Phosducin-like protein 3.